The chain runs to 937 residues: Alanine--tRNA ligase (937 aa).

Residues His-626, His-630, Cys-727, and His-731 each contribute to the Zn(2+) site.

This sequence belongs to the class-II aminoacyl-tRNA synthetase family. Requires Zn(2+) as cofactor.

Its subcellular location is the cytoplasm. It carries out the reaction tRNA(Ala) + L-alanine + ATP = L-alanyl-tRNA(Ala) + AMP + diphosphate. In terms of biological role, catalyzes the attachment of alanine to tRNA(Ala) in a two-step reaction: alanine is first activated by ATP to form Ala-AMP and then transferred to the acceptor end of tRNA(Ala). Also edits incorrectly charged Ser-tRNA(Ala) and Gly-tRNA(Ala) via its editing domain. The sequence is that of Alanine--tRNA ligase from Opitutus terrae (strain DSM 11246 / JCM 15787 / PB90-1).